A 206-amino-acid polypeptide reads, in one-letter code: Threonine efflux protein (206 aa).

A helical transmembrane segment spans residues 1–21; sequence MMMLFFTVAMVHIVALMSPGP. Over 22-43 the chain is Periplasmic; sequence DFFFVSQTAVSRSRKEAMMGVL. Residues 44-64 form a helical membrane-spanning segment; sequence GITCGVMVWAGVALLGLHLII. Residues 65–66 lie on the Cytoplasmic side of the membrane; that stretch reads EK. Residues 67 to 87 form a helical membrane-spanning segment; it reads MAWLHTIIMVGGGLYLCWMGY. The Periplasmic segment spans residues 88 to 149; the sequence is QMLRGALKKQ…VGDNVGAAAR (62 aa). A helical membrane pass occupies residues 150 to 173; sequence WGIFALITLETLAWFTVVASLFAL. At 174–206 the chain is on the cytoplasmic side; the sequence is PKMRRGYQRLAKWIDGFAGALFAGFGIHLIISR.

Belongs to the Rht family.

Its subcellular location is the cell inner membrane. In terms of biological role, conducts the efflux of threonine. This is Threonine efflux protein (rhtC) from Salmonella typhimurium (strain LT2 / SGSC1412 / ATCC 700720).